The chain runs to 326 residues: Aspartate--ammonia ligase (326 aa).

The protein belongs to the class-II aminoacyl-tRNA synthetase family. AsnA subfamily.

Its subcellular location is the cytoplasm. The catalysed reaction is L-aspartate + NH4(+) + ATP = L-asparagine + AMP + diphosphate + H(+). Its pathway is amino-acid biosynthesis; L-asparagine biosynthesis; L-asparagine from L-aspartate (ammonia route): step 1/1. This is Aspartate--ammonia ligase from Malacoplasma penetrans (strain HF-2) (Mycoplasma penetrans).